Reading from the N-terminus, the 258-residue chain is Ribosomal RNA small subunit methyltransferase A (258 aa).

Residues His-9, Leu-11, Gly-36, Glu-57, Asp-83, and Asn-102 each coordinate S-adenosyl-L-methionine.

It belongs to the class I-like SAM-binding methyltransferase superfamily. rRNA adenine N(6)-methyltransferase family. RsmA subfamily.

The protein resides in the cytoplasm. The enzyme catalyses adenosine(1518)/adenosine(1519) in 16S rRNA + 4 S-adenosyl-L-methionine = N(6)-dimethyladenosine(1518)/N(6)-dimethyladenosine(1519) in 16S rRNA + 4 S-adenosyl-L-homocysteine + 4 H(+). In terms of biological role, specifically dimethylates two adjacent adenosines (A1518 and A1519) in the loop of a conserved hairpin near the 3'-end of 16S rRNA in the 30S particle. May play a critical role in biogenesis of 30S subunits. The chain is Ribosomal RNA small subunit methyltransferase A from Caulobacter vibrioides (strain ATCC 19089 / CIP 103742 / CB 15) (Caulobacter crescentus).